Here is a 469-residue protein sequence, read N- to C-terminus: Uronate isomerase (469 aa).

Belongs to the metallo-dependent hydrolases superfamily. Uronate isomerase family.

It carries out the reaction D-glucuronate = D-fructuronate. It catalyses the reaction aldehydo-D-galacturonate = keto-D-tagaturonate. It functions in the pathway carbohydrate metabolism; pentose and glucuronate interconversion. This Yersinia enterocolitica serotype O:8 / biotype 1B (strain NCTC 13174 / 8081) protein is Uronate isomerase.